The chain runs to 967 residues: Phosphoenolpyruvate carboxylase (967 aa).

Position 10 is a phosphoserine (serine 10). Catalysis depends on residues histidine 171 and lysine 601. The tract at residues 915–936 (NASRLPLSRESPEATKPADELV) is disordered. The span at 924 to 933 (ESPEATKPAD) shows a compositional bias: basic and acidic residues.

The protein belongs to the PEPCase type 1 family. Homotetramer. Mg(2+) is required as a cofactor.

It is found in the cytoplasm. It carries out the reaction oxaloacetate + phosphate = phosphoenolpyruvate + hydrogencarbonate. By light-reversible phosphorylation. Its function is as follows. Through the carboxylation of phosphoenolpyruvate (PEP) it forms oxaloacetate, a four-carbon dicarboxylic acid source for the tricarboxylic acid cycle. This is Phosphoenolpyruvate carboxylase from Pisum sativum (Garden pea).